The sequence spans 257 residues: UPF0246 protein YaaA (257 aa).

It belongs to the UPF0246 family.

This chain is UPF0246 protein YaaA, found in Salmonella agona (strain SL483).